Here is a 678-residue protein sequence, read N- to C-terminus: Probable E3 ubiquitin ligase complex SCF subunit sconB (678 aa).

The disordered stretch occupies residues Met-1–Ser-52. A compositionally biased stretch (basic and acidic residues) spans Glu-35–His-49. The 47-residue stretch at Ile-178–Met-224 folds into the F-box domain. Residues Val-266 to Glu-287 are disordered. WD repeat units follow at residues Gly-347–Asp-375, Gly-387–Asn-415, Gly-427–Asn-455, Gly-466–Asp-496, Gly-508–Asp-543, Met-553–Glu-595, Gly-607–Asp-635, and Gly-647–Ser-675.

Belongs to the WD repeat MET30/SCONB/SCON-2 family. In terms of assembly, component of the SCF(sconB) E3 ubiquitin ligase complex.

It functions in the pathway protein modification; protein ubiquitination. Its function is as follows. Component of the SCF(sconB) E3 ubiquitin ligase complex involved in the regulation of sulfur metabolite repression, probably by mediating the inactivation or degradation of the metR transcription factor. This is Probable E3 ubiquitin ligase complex SCF subunit sconB (sconB) from Emericella nidulans (strain FGSC A4 / ATCC 38163 / CBS 112.46 / NRRL 194 / M139) (Aspergillus nidulans).